The sequence spans 389 residues: S-adenosylmethionine synthase (389 aa).

H15 provides a ligand contact to ATP. D17 is a Mg(2+) binding site. E43 lines the K(+) pocket. 2 residues coordinate L-methionine: E56 and Q99. A flexible loop region spans residues 99–109 (QSPDIAQGVNE). ATP contacts are provided by residues 166–168 (DAK), 234–235 (RF), D243, 249–250 (RK), A266, and K270. D243 serves as a coordination point for L-methionine. Residue K274 participates in L-methionine binding.

Belongs to the AdoMet synthase family. As to quaternary structure, homotetramer; dimer of dimers. The cofactor is Mg(2+). It depends on K(+) as a cofactor.

The protein localises to the cytoplasm. The enzyme catalyses L-methionine + ATP + H2O = S-adenosyl-L-methionine + phosphate + diphosphate. It participates in amino-acid biosynthesis; S-adenosyl-L-methionine biosynthesis; S-adenosyl-L-methionine from L-methionine: step 1/1. Catalyzes the formation of S-adenosylmethionine (AdoMet) from methionine and ATP. The overall synthetic reaction is composed of two sequential steps, AdoMet formation and the subsequent tripolyphosphate hydrolysis which occurs prior to release of AdoMet from the enzyme. In Neisseria meningitidis serogroup A / serotype 4A (strain DSM 15465 / Z2491), this protein is S-adenosylmethionine synthase.